Here is a 145-residue protein sequence, read N- to C-terminus: Transcription antitermination protein NusB (145 aa).

This sequence belongs to the NusB family.

In terms of biological role, involved in transcription antitermination. Required for transcription of ribosomal RNA (rRNA) genes. Binds specifically to the boxA antiterminator sequence of the ribosomal RNA (rrn) operons. The sequence is that of Transcription antitermination protein NusB from Ruminiclostridium cellulolyticum (strain ATCC 35319 / DSM 5812 / JCM 6584 / H10) (Clostridium cellulolyticum).